Here is a 905-residue protein sequence, read N- to C-terminus: Transcription termination factor 1 (905 aa).

Composition is skewed to basic and acidic residues over residues M1 to D16 and I24 to S33. The tract at residues M1–S33 is disordered. An N-terminal region (NRD) region spans residues M1 to K223. S65 carries the post-translational modification Phosphoserine. A disordered region spans residues S151–Q443. 2 stretches are compositionally biased toward basic residues: residues V163 to K174 and H215 to S226. The residue at position 240 (S240) is a Phosphoserine. At T248 the chain carries Phosphothreonine. 3 stretches are compositionally biased toward basic residues: residues T270 to S283, N330 to S339, and T385 to R401. S403 bears the Phosphoserine mark. The segment covering P410–F419 has biased composition (polar residues). A Phosphotyrosine modification is found at Y476. S478, S481, and S487 each carry phosphoserine. The may be involved in interaction with ARF stretch occupies residues L498–P886. Myb-like domains are found at residues D612–S661 and S661–L745. K700 participates in a covalent cross-link: Glycyl lysine isopeptide (Lys-Gly) (interchain with G-Cter in SUMO2). S872 carries the post-translational modification Phosphoserine.

Oligomer. The oligomeric structure enables to interact simultaneously with two separate DNA fragments. Interacts with BAZ2A/TIP5. Interacts with CAVIN1. Interacts (via the N-terminal region (NRD) and a C-terminal region) with CDKN2A/ARF; the interaction is direct. Interacts (via C-terminal region) with NPM1/B23.

It localises to the nucleus. It is found in the nucleolus. The protein resides in the nucleoplasm. Multifunctional nucleolar protein that terminates ribosomal gene transcription, mediates replication fork arrest and regulates RNA polymerase I transcription on chromatin. Plays a dual role in rDNA regulation, being involved in both activation and silencing of rDNA transcription. Interaction with BAZ2A/TIP5 recovers DNA-binding activity. This Homo sapiens (Human) protein is Transcription termination factor 1 (TTF1).